The following is a 290-amino-acid chain: Probable protein phosphatase 2C 20 (290 aa).

The 248-residue stretch at 31-278 (AHGYDFVKGK…DDISCIVPCF (248 aa)) folds into the PPM-type phosphatase domain. Asp68, Gly69, Asp230, and Asp269 together coordinate Mn(2+).

It belongs to the PP2C family. Mg(2+) is required as a cofactor. It depends on Mn(2+) as a cofactor.

It catalyses the reaction O-phospho-L-seryl-[protein] + H2O = L-seryl-[protein] + phosphate. The enzyme catalyses O-phospho-L-threonyl-[protein] + H2O = L-threonyl-[protein] + phosphate. Its function is as follows. May be involved in defense signaling. The chain is Probable protein phosphatase 2C 20 (PPC3-1.2) from Arabidopsis thaliana (Mouse-ear cress).